The primary structure comprises 713 residues: Metal transporter CNNM3 (713 aa).

Residues 7–29 (AVVGWLGWVLAAFCLGSTAGEAA) form a helical membrane-spanning segment. Asn-73 is a glycosylation site (N-linked (GlcNAc...) asparagine). A CNNM transmembrane domain is found at 136–314 (EAAPPWALGL…DPYSDLSKGV (179 aa)). 4 consecutive transmembrane segments (helical) span residues 137–157 (AAPP…AAVA), 199–219 (CALG…AVLL), 227–247 (AVPA…VLPA), and 267–287 (LAVL…ELAA). CBS domains follow at residues 324-385 (LTPL…CTPL) and 392-458 (YNHP…ILDE). Positions 664 to 713 (LPPSPENAELQAIPGSQTRLLGDKSRETAGSTNSRPSIPVEESPGRNPGV) are disordered. Phosphoserine occurs at positions 667 and 706.

It belongs to the ACDP family. In terms of tissue distribution, widely expressed with highest levels in brain, kidney, liver, lung and heart.

The protein resides in the cell membrane. Functionally, probable metal transporter. This chain is Metal transporter CNNM3 (Cnnm3), found in Mus musculus (Mouse).